We begin with the raw amino-acid sequence, 105 residues long: UPF0145 protein AHA_2580 (105 aa).

The protein belongs to the UPF0145 family.

In Aeromonas hydrophila subsp. hydrophila (strain ATCC 7966 / DSM 30187 / BCRC 13018 / CCUG 14551 / JCM 1027 / KCTC 2358 / NCIMB 9240 / NCTC 8049), this protein is UPF0145 protein AHA_2580.